We begin with the raw amino-acid sequence, 360 residues long: Phospho-N-acetylmuramoyl-pentapeptide-transferase (360 aa).

10 helical membrane-spanning segments follow: residues isoleucine 27 to tryptophan 47, threonine 71 to alanine 91, tyrosine 97 to tyrosine 117, tryptophan 132 to glycine 152, valine 168 to serine 188, glycine 199 to threonine 219, alanine 236 to phenylalanine 256, valine 263 to leucine 283, phenylalanine 288 to valine 308, and valine 338 to lysine 358.

This sequence belongs to the glycosyltransferase 4 family. MraY subfamily. It depends on Mg(2+) as a cofactor.

It localises to the cell inner membrane. It catalyses the reaction UDP-N-acetyl-alpha-D-muramoyl-L-alanyl-gamma-D-glutamyl-meso-2,6-diaminopimeloyl-D-alanyl-D-alanine + di-trans,octa-cis-undecaprenyl phosphate = di-trans,octa-cis-undecaprenyl diphospho-N-acetyl-alpha-D-muramoyl-L-alanyl-D-glutamyl-meso-2,6-diaminopimeloyl-D-alanyl-D-alanine + UMP. The protein operates within cell wall biogenesis; peptidoglycan biosynthesis. Catalyzes the initial step of the lipid cycle reactions in the biosynthesis of the cell wall peptidoglycan: transfers peptidoglycan precursor phospho-MurNAc-pentapeptide from UDP-MurNAc-pentapeptide onto the lipid carrier undecaprenyl phosphate, yielding undecaprenyl-pyrophosphoryl-MurNAc-pentapeptide, known as lipid I. The protein is Phospho-N-acetylmuramoyl-pentapeptide-transferase of Proteus mirabilis (strain HI4320).